A 722-amino-acid chain; its full sequence is Mating-type switching protein swi2 (722 aa).

2 disordered regions span residues 1 to 35 and 301 to 342; these read MNVNKKQESIPVNTGSESISSNDNERFEQGKGVGS and SEEF…PLPS. Over residues 9–22 the composition is skewed to polar residues; it reads SIPVNTGSESISSN. Over residues 302-316 the composition is skewed to acidic residues; sequence EEFDFEPSREDEDFP. Residues 319 to 332 show a composition bias toward polar residues; the sequence is TSDSTGQDPLSSEP.

Interacts with swi5 and rhp51.

Functionally, required for normal mating-type switching. In Schizosaccharomyces pombe (strain 972 / ATCC 24843) (Fission yeast), this protein is Mating-type switching protein swi2 (swi2).